The chain runs to 138 residues: ATP synthase epsilon chain (138 aa).

Belongs to the ATPase epsilon chain family. In terms of assembly, F-type ATPases have 2 components, CF(1) - the catalytic core - and CF(0) - the membrane proton channel. CF(1) has five subunits: alpha(3), beta(3), gamma(1), delta(1), epsilon(1). CF(0) has three main subunits: a, b and c.

Its subcellular location is the cell inner membrane. In terms of biological role, produces ATP from ADP in the presence of a proton gradient across the membrane. The polypeptide is ATP synthase epsilon chain (Polynucleobacter necessarius subsp. necessarius (strain STIR1)).